Reading from the N-terminus, the 1396-residue chain is ATP-binding cassette transporter pdr1 (1396 aa).

Residues 1–22 (MSEQEKGKGDLDDPNSKNTKCP) form a disordered region. The ABC transporter 1 domain occupies 73–320 (LHPINIIFRT…FLDLGFIPAK (248 aa)). The ABC transmembrane type-2 1 domain occupies 412–622 (LQVFATAKVT…GYESIMLNEF (211 aa)). A run of 6 helical transmembrane segments spans residues 431-451 (YIAT…SLFY), 466-486 (VLSN…DIIF), 512-532 (LVEF…VYFL), 543-563 (FIFY…FRFI), 572-592 (IAAL…GAVM), and 680-700 (GIIL…ANFI). An ABC transporter 2 domain is found at 758 to 1001 (LCWRDLNFTV…LVNYFKRIHG (244 aa)). ATP is bound at residue 794 to 801 (GENKSGKS). Residues 1071–1286 (FQIYKISMRN…FLEGMIGGVL (216 aa)) form the ABC transmembrane type-2 2 domain. Helical transmembrane passes span 1095-1115 (VAFN…QGVG), 1166-1186 (FIIA…TLFF), 1208-1228 (FAWL…IGIA), 1245-1265 (FVFI…VGFW), and 1361-1381 (CIMI…YYII).

Belongs to the ABC transporter superfamily. ABCG family. PDR (TC 3.A.1.205) subfamily.

Its subcellular location is the endoplasmic reticulum membrane. The sequence is that of ATP-binding cassette transporter pdr1 (pdr1) from Schizosaccharomyces pombe (strain 972 / ATCC 24843) (Fission yeast).